The primary structure comprises 801 residues: N,N'-diacetylchitobiose phosphorylase (801 aa).

Arg333, Arg343, Arg349, Asp350, Trp490, and Asp492 together coordinate N-acetyl-alpha-D-glucosamine 1-phosphate. Catalysis depends on Asp492, which acts as the Proton donor. Positions 492, 636, and 637 each coordinate N-acetyl-D-glucosamine. N-acetyl-alpha-D-glucosamine 1-phosphate is bound by residues Glu637, His644, Gln690, Thr709, and Gly710.

Belongs to the glycosyl hydrolase 94 family. As to quaternary structure, homodimer.

It catalyses the reaction N,N'-diacetylchitobiose + phosphate = N-acetyl-alpha-D-glucosamine 1-phosphate + N-acetyl-D-glucosamine. Catalyzes the reversible phosphorolysis of chitobiose (N,N'-diacetylchitobiose or (GlcNAc)(2)) into N-acetyl-alpha-D-glucosamine 1-phosphate (GlcNAc-1-P) and N-acetyl-D-glucosamine (GlcNAc) with inversion of the anomeric configuration. In the synthetic reaction, is also active on glucose-1-phosphate with 10% activity as compared with that on GlcNAc-1-P. GlcNAc is the best acceptor substrate, but the enzyme can use aryl-beta-glycosides of GlcNAc as the acceptor substrate with 10-20% activities of GlcNAc. Shows no phosphorolytic activity on cellobiose. In Vibrio proteolyticus (Aeromonas proteolytica), this protein is N,N'-diacetylchitobiose phosphorylase.